The primary structure comprises 211 residues: Large ribosomal subunit protein bL9 (211 aa).

The segment at D180–D211 is disordered.

The protein belongs to the bacterial ribosomal protein bL9 family.

In terms of biological role, binds to the 23S rRNA. The polypeptide is Large ribosomal subunit protein bL9 (Jannaschia sp. (strain CCS1)).